We begin with the raw amino-acid sequence, 320 residues long: Ribose-phosphate pyrophosphokinase 3 (320 aa).

Asp131, His133, Asp142, and Asp146 together coordinate Mg(2+).

It belongs to the ribose-phosphate pyrophosphokinase family.

It localises to the cytoplasm. The enzyme catalyses D-ribose 5-phosphate + ATP = 5-phospho-alpha-D-ribose 1-diphosphate + AMP + H(+). Its pathway is metabolic intermediate biosynthesis; 5-phospho-alpha-D-ribose 1-diphosphate biosynthesis; 5-phospho-alpha-D-ribose 1-diphosphate from D-ribose 5-phosphate (route I): step 1/1. Its function is as follows. 5-phosphoribose 1-diphosphate synthase involved in nucleotide, histidine, and tryptophan biosynthesis. Active in heteromultimeric complexes with other 5-phosphoribose 1-diphosphate synthases (PRS2, PRS3, PRS4 and PRS5). The sequence is that of Ribose-phosphate pyrophosphokinase 3 (PRS3) from Saccharomyces cerevisiae (strain ATCC 204508 / S288c) (Baker's yeast).